Consider the following 444-residue polypeptide: Phosphomethylpyrimidine synthase (444 aa).

Substrate is bound by residues Asn80, Met109, Tyr138, His174, 194-196 (SRG), 235-238 (DSLR), and Glu274. His278 is a binding site for Zn(2+). Position 301 (Tyr301) interacts with substrate. Position 342 (His342) interacts with Zn(2+). The [4Fe-4S] cluster site is built by Cys422, Cys425, and Cys430.

It belongs to the ThiC family. In terms of assembly, homodimer. The cofactor is [4Fe-4S] cluster.

The enzyme catalyses 5-amino-1-(5-phospho-beta-D-ribosyl)imidazole + S-adenosyl-L-methionine = 4-amino-2-methyl-5-(phosphooxymethyl)pyrimidine + CO + 5'-deoxyadenosine + formate + L-methionine + 3 H(+). It functions in the pathway cofactor biosynthesis; thiamine diphosphate biosynthesis. Catalyzes the synthesis of the hydroxymethylpyrimidine phosphate (HMP-P) moiety of thiamine from aminoimidazole ribotide (AIR) in a radical S-adenosyl-L-methionine (SAM)-dependent reaction. This is Phosphomethylpyrimidine synthase from Nitratiruptor sp. (strain SB155-2).